Here is a 268-residue protein sequence, read N- to C-terminus: Tryptophan synthase alpha chain (268 aa).

Active-site proton acceptor residues include E49 and D60.

It belongs to the TrpA family. Tetramer of two alpha and two beta chains.

The catalysed reaction is (1S,2R)-1-C-(indol-3-yl)glycerol 3-phosphate + L-serine = D-glyceraldehyde 3-phosphate + L-tryptophan + H2O. It participates in amino-acid biosynthesis; L-tryptophan biosynthesis; L-tryptophan from chorismate: step 5/5. In terms of biological role, the alpha subunit is responsible for the aldol cleavage of indoleglycerol phosphate to indole and glyceraldehyde 3-phosphate. This is Tryptophan synthase alpha chain from Xanthomonas euvesicatoria pv. vesicatoria (strain 85-10) (Xanthomonas campestris pv. vesicatoria).